The following is a 353-amino-acid chain: Photosystem II D2 protein (353 aa).

T2 bears the N-acetylthreonine mark. The residue at position 2 (T2) is a Phosphothreonine. Residues 41-61 (CAYFALGGWFTGTTFVTSWYT) form a helical membrane-spanning segment. H118 is a chlorophyll a binding site. The chain crosses the membrane as a helical span at residues 125–141 (GFMLRQFELARSVQLRP). Q130 and N143 together coordinate pheophytin a. Residues 153–166 (VFVSVFLIYPLGQS) traverse the membrane as a helical segment. H198 is a chlorophyll a binding site. Residues 208-228 (AALLCAIHGATVENTLFEDGD) traverse the membrane as a helical segment. The a plastoquinone site is built by H215 and F262. Position 215 (H215) interacts with Fe cation. Residue H269 participates in Fe cation binding. A helical membrane pass occupies residues 279–295 (GSWMSAIGVVGLALNLR).

The protein belongs to the reaction center PufL/M/PsbA/D family. As to quaternary structure, PSII is composed of 1 copy each of membrane proteins PsbA, PsbB, PsbC, PsbD, PsbE, PsbF, PsbH, PsbI, PsbJ, PsbK, PsbL, PsbM, PsbT, PsbX, PsbY, PsbZ, Psb30/Ycf12, at least 3 peripheral proteins of the oxygen-evolving complex and a large number of cofactors. It forms dimeric complexes. Requires The D1/D2 heterodimer binds P680, chlorophylls that are the primary electron donor of PSII, and subsequent electron acceptors. It shares a non-heme iron and each subunit binds pheophytin, quinone, additional chlorophylls, carotenoids and lipids. There is also a Cl(-1) ion associated with D1 and D2, which is required for oxygen evolution. The PSII complex binds additional chlorophylls, carotenoids and specific lipids. as cofactor.

The protein localises to the plastid. It is found in the chloroplast thylakoid membrane. It catalyses the reaction 2 a plastoquinone + 4 hnu + 2 H2O = 2 a plastoquinol + O2. Functionally, photosystem II (PSII) is a light-driven water:plastoquinone oxidoreductase that uses light energy to abstract electrons from H(2)O, generating O(2) and a proton gradient subsequently used for ATP formation. It consists of a core antenna complex that captures photons, and an electron transfer chain that converts photonic excitation into a charge separation. The D1/D2 (PsbA/PsbD) reaction center heterodimer binds P680, the primary electron donor of PSII as well as several subsequent electron acceptors. D2 is needed for assembly of a stable PSII complex. The sequence is that of Photosystem II D2 protein from Pinus koraiensis (Korean pine).